The sequence spans 434 residues: Mitochondrial distribution and morphology protein 12 (434 aa).

Residues 1–434 (MSIDIDWERA…VYPSFWTFLV (434 aa)) enclose the SMP-LTD domain. Residues 70-83 (YEEDDNENFSESSE) are compositionally biased toward acidic residues. Disordered regions lie at residues 70–141 (YEED…LRSP) and 181–275 (TPLG…DDLP). Residues 86–97 (SPTREPVDRYGS) are compositionally biased toward basic and acidic residues. A compositionally biased stretch (polar residues) spans 215–237 (SAQSRPSTANTGNTLLSRGSMSS).

This sequence belongs to the MDM12 family. In terms of assembly, component of the ER-mitochondria encounter structure (ERMES) or MDM complex, composed of MMM1, MDM10, MDM12 and MDM34. An MMM1 homodimer associates with one molecule of MDM12 on each side in a pairwise head-to-tail manner, and the SMP-LTD domains of MMM1 and MDM12 generate a continuous hydrophobic tunnel for phospholipid trafficking.

The protein resides in the mitochondrion outer membrane. It localises to the endoplasmic reticulum membrane. Component of the ERMES/MDM complex, which serves as a molecular tether to connect the endoplasmic reticulum (ER) and mitochondria. Components of this complex are involved in the control of mitochondrial shape and protein biogenesis, and function in nonvesicular lipid trafficking between the ER and mitochondria. MDM12 is required for the interaction of the ER-resident membrane protein MMM1 and the outer mitochondrial membrane-resident beta-barrel protein MDM10. The MDM12-MMM1 subcomplex functions in the major beta-barrel assembly pathway that is responsible for biogenesis of all mitochondrial outer membrane beta-barrel proteins, and acts in a late step after the SAM complex. The MDM10-MDM12-MMM1 subcomplex further acts in the TOM40-specific pathway after the action of the MDM12-MMM1 complex. Essential for establishing and maintaining the structure of mitochondria and maintenance of mtDNA nucleoids. This is Mitochondrial distribution and morphology protein 12 from Blastomyces gilchristii (strain SLH14081) (Blastomyces dermatitidis).